Reading from the N-terminus, the 101-residue chain is ATP synthase subunit c (101 aa).

2 helical membrane passes run 31–51 (AFAY…GAGQ) and 81–101 (AISE…IFVG).

This sequence belongs to the ATPase C chain family. In terms of assembly, F-type ATPases have 2 components, F(1) - the catalytic core - and F(0) - the membrane proton channel. F(1) has five subunits: alpha(3), beta(3), gamma(1), delta(1), epsilon(1). F(0) has three main subunits: a(1), b(2) and c(10-14). The alpha and beta chains form an alternating ring which encloses part of the gamma chain. F(1) is attached to F(0) by a central stalk formed by the gamma and epsilon chains, while a peripheral stalk is formed by the delta and b chains.

It is found in the cell membrane. In terms of biological role, f(1)F(0) ATP synthase produces ATP from ADP in the presence of a proton or sodium gradient. F-type ATPases consist of two structural domains, F(1) containing the extramembraneous catalytic core and F(0) containing the membrane proton channel, linked together by a central stalk and a peripheral stalk. During catalysis, ATP synthesis in the catalytic domain of F(1) is coupled via a rotary mechanism of the central stalk subunits to proton translocation. Its function is as follows. Key component of the F(0) channel; it plays a direct role in translocation across the membrane. A homomeric c-ring of between 10-14 subunits forms the central stalk rotor element with the F(1) delta and epsilon subunits. The polypeptide is ATP synthase subunit c (Mesomycoplasma hyopneumoniae (strain 232) (Mycoplasma hyopneumoniae)).